The sequence spans 208 residues: Type 3 secretion system stator protein (208 aa).

This sequence belongs to the SctL stator family. In terms of assembly, the core secretion machinery of the T3SS is composed of approximately 20 different proteins, including cytoplasmic components, a base, an export apparatus and a needle. This subunit is part of the cytosolic complex.

Its subcellular location is the cytoplasm. In terms of biological role, component of the type III secretion system (T3SS), also called injectisome, which is used to inject bacterial effector proteins into eukaryotic host cells. Acts as a regulator of the HrcN/SctN ATPase activity. The polypeptide is Type 3 secretion system stator protein (Sinorhizobium fredii (strain NBRC 101917 / NGR234)).